The sequence spans 170 residues: Macro domain-containing protein DR_2288 (170 aa).

The Macro domain maps to 1-170; that stretch reads MPLELVQGDI…HVFERALAQL (170 aa).

This sequence belongs to the MacroD-type family.

In Deinococcus radiodurans (strain ATCC 13939 / DSM 20539 / JCM 16871 / CCUG 27074 / LMG 4051 / NBRC 15346 / NCIMB 9279 / VKM B-1422 / R1), this protein is Macro domain-containing protein DR_2288.